The following is a 306-amino-acid chain: CRISPR-associated endonuclease Cas1 (306 aa).

Residues glutamate 143, histidine 210, and aspartate 223 each coordinate Mn(2+).

This sequence belongs to the CRISPR-associated endonuclease Cas1 family. As to quaternary structure, homodimer, forms a heterotetramer with a Cas2 homodimer. It depends on Mg(2+) as a cofactor. Mn(2+) is required as a cofactor.

CRISPR (clustered regularly interspaced short palindromic repeat), is an adaptive immune system that provides protection against mobile genetic elements (viruses, transposable elements and conjugative plasmids). CRISPR clusters contain spacers, sequences complementary to antecedent mobile elements, and target invading nucleic acids. CRISPR clusters are transcribed and processed into CRISPR RNA (crRNA). Acts as a dsDNA endonuclease. Involved in the integration of spacer DNA into the CRISPR cassette. The protein is CRISPR-associated endonuclease Cas1 of Geobacter sulfurreducens (strain ATCC 51573 / DSM 12127 / PCA).